The chain runs to 115 residues: DNA-binding protein NP_4416A (115 aa).

The segment covering 1–11 (MSGEPTDEDLE) has biased composition (acidic residues). A disordered region spans residues 1–46 (MSGEPTDEDLEELRKKKMEQLKEQGGEGQSEAAEAQRQQAEAQKKA). The segment covering 12 to 25 (ELRKKKMEQLKEQG) has biased composition (basic and acidic residues). The segment covering 29–41 (QSEAAEAQRQQAE) has biased composition (low complexity).

It belongs to the PDCD5 family.

The chain is DNA-binding protein NP_4416A from Natronomonas pharaonis (strain ATCC 35678 / DSM 2160 / CIP 103997 / JCM 8858 / NBRC 14720 / NCIMB 2260 / Gabara) (Halobacterium pharaonis).